Reading from the N-terminus, the 253-residue chain is Phycobilisome rod-core linker polypeptide CpcG4 (253 aa).

One can recognise a PBS-linker domain in the interval 11–191; that stretch reads SSQNHRVTSF…DFQEKAGTVQ (181 aa).

The protein belongs to the phycobilisome linker protein family. Part of the phycobilisome, a hemidiscoidal structure that is composed of two distinct substructures: a core complex and a number of rods radiating from the core.

The protein localises to the cellular thylakoid membrane. Its function is as follows. Rod-core linker protein required for attachment of phycocyanin to allophycocyanin in cores of phycobilisomes. Linker polypeptides determine the state of aggregation and the location of the disk-shaped phycobiliprotein units within the phycobilisome and modulate their spectroscopic properties in order to mediate a directed and optimal energy transfer. The protein is Phycobilisome rod-core linker polypeptide CpcG4 of Nostoc sp. (strain PCC 7120 / SAG 25.82 / UTEX 2576).